Reading from the N-terminus, the 676-residue chain is Probable ERAD-associated E3 ubiquitin-protein ligase ASI1 (676 aa).

Over 1-78 (MSTNILQHVK…TLQLAKVGIR (78 aa)) the chain is Perinuclear space. 4 N-linked (GlcNAc...) asparagine glycosylation sites follow: N24, N34, N46, and N66. Residues 79–99 (MFFSYSVSKYAVLCFSTAIIL) traverse the membrane as a helical segment. Topologically, residues 100 to 126 (NRLTVMSSLRSNSTNIRLPLWSKTLLH) are nuclear. Residues 127–147 (LVATLSLVKALLQILSQFGLM) traverse the membrane as a helical segment. At 148–156 (HELHVSDTD) the chain is on the perinuclear space side. Residues 157-177 (FYALSVYLFVALSDCIEIFIS) traverse the membrane as a helical segment. The Nuclear portion of the chain corresponds to 178–181 (STTN). A helical membrane pass occupies residues 182-202 (VPSLICSDFSIWGLSLNLYII). Over 203 to 277 (SKMPAGQQHI…NICLIHNYFP (75 aa)) the chain is Perinuclear space. Residues 278–298 (GFFYISTILLASIGIFLKALF) form a helical membrane-spanning segment. The Nuclear portion of the chain corresponds to 299-676 (TSNPFRSLYS…VKGYSKLNIV (378 aa)). Residues 624-664 (CLICKVNKRNIVTWPCRCLALCDDCRISLGYKGFATCVSCD) form an RING-type; atypical zinc finger.

In terms of assembly, component of the Asi complex, which contains ASI1, ASI2 and ASI3. Interacts directly with ASI1.

It is found in the nucleus inner membrane. The enzyme catalyses S-ubiquitinyl-[E2 ubiquitin-conjugating enzyme]-L-cysteine + [acceptor protein]-L-lysine = [E2 ubiquitin-conjugating enzyme]-L-cysteine + N(6)-ubiquitinyl-[acceptor protein]-L-lysine.. Part of the nuclear inner membrane (INM)-specific branch of the ER-associated degradation (ERAD) pathway, required for the elimination of misfolded proteins in the INM, a specialized ER subdomain. Required for ERG11 degradation. Negative regulator of SPS-sensor signaling. Together with ASI2 and ASI3, prevents the unprocessed precursor forms of STP1 and STP2 that escape cytoplasmic anchoring from inducing SPS-sensor-regulated genes in the absence of inducing signals. Controls amino acid permease (AAP) gene expression in response to amino acid availability, a process mediated by the transcription factors STP1 and STP1. This is Probable ERAD-associated E3 ubiquitin-protein ligase ASI1 (ASI3) from Saccharomyces cerevisiae (strain ATCC 204508 / S288c) (Baker's yeast).